The primary structure comprises 473 residues: Photosystem II CP43 reaction center protein (473 aa).

Positions 1–14 are excised as a propeptide; it reads MKTLYSLRRFYPVE. An N-acetylthreonine modification is found at T15. The residue at position 15 (T15) is a Phosphothreonine. The next 5 helical transmembrane spans lie at 69-93, 134-155, 178-200, 255-275, and 291-312; these read LFEV…PHLA, LLGP…KDRN, KALY…RRIT, KPFA…LSYS, and WFNN…ASQA. E367 provides a ligand contact to [CaMn4O5] cluster. A helical membrane pass occupies residues 447–471; sequence RARAAAAGFEKGIDRDFEPVLSMTP.

This sequence belongs to the PsbB/PsbC family. PsbC subfamily. As to quaternary structure, PSII is composed of 1 copy each of membrane proteins PsbA, PsbB, PsbC, PsbD, PsbE, PsbF, PsbH, PsbI, PsbJ, PsbK, PsbL, PsbM, PsbT, PsbX, PsbY, PsbZ, Psb30/Ycf12, at least 3 peripheral proteins of the oxygen-evolving complex and a large number of cofactors. It forms dimeric complexes. It depends on Binds multiple chlorophylls and provides some of the ligands for the Ca-4Mn-5O cluster of the oxygen-evolving complex. It may also provide a ligand for a Cl- that is required for oxygen evolution. PSII binds additional chlorophylls, carotenoids and specific lipids. as a cofactor.

It is found in the plastid. It localises to the chloroplast thylakoid membrane. Its function is as follows. One of the components of the core complex of photosystem II (PSII). It binds chlorophyll and helps catalyze the primary light-induced photochemical processes of PSII. PSII is a light-driven water:plastoquinone oxidoreductase, using light energy to abstract electrons from H(2)O, generating O(2) and a proton gradient subsequently used for ATP formation. This is Photosystem II CP43 reaction center protein from Illicium oligandrum (Star anise).